A 248-amino-acid chain; its full sequence is Urease accessory protein UreG 1 (248 aa).

Positions 1–14 are enriched in basic and acidic residues; that stretch reads MLPEHHDHGHEHGG. The segment at 1–36 is disordered; the sequence is MLPEHHDHGHEHGGNGHGHGHRHQVNFDPTAAEPDP. 53–60 serves as a coordination point for GTP; that stretch reads GPVGSGKT.

The protein belongs to the SIMIBI class G3E GTPase family. UreG subfamily. As to quaternary structure, homodimer. UreD, UreF and UreG form a complex that acts as a GTP-hydrolysis-dependent molecular chaperone, activating the urease apoprotein by helping to assemble the nickel containing metallocenter of UreC. The UreE protein probably delivers the nickel.

The protein resides in the cytoplasm. Facilitates the functional incorporation of the urease nickel metallocenter. This process requires GTP hydrolysis, probably effectuated by UreG. The polypeptide is Urease accessory protein UreG 1 (Saccharopolyspora erythraea (strain ATCC 11635 / DSM 40517 / JCM 4748 / NBRC 13426 / NCIMB 8594 / NRRL 2338)).